Reading from the N-terminus, the 94-residue chain is Small ribosomal subunit protein uS19 (94 aa).

Belongs to the universal ribosomal protein uS19 family.

Its function is as follows. Protein S19 forms a complex with S13 that binds strongly to the 16S ribosomal RNA. The polypeptide is Small ribosomal subunit protein uS19 (Buchnera aphidicola subsp. Cinara cedri (strain Cc)).